The following is a 249-amino-acid chain: Proteasome subunit alpha 2 (249 aa).

M1 bears the N-acetylmethionine mark.

The protein belongs to the peptidase T1A family. The 20S proteasome core is composed of 14 alpha and 14 beta subunits that assemble into four stacked heptameric rings, resulting in a barrel-shaped structure. The two inner rings, each composed of seven catalytic beta subunits, are sandwiched by two outer rings, each composed of seven alpha subunits. H.volcanii produces at least 2 types of 20S proteasomes: an alpha1-beta proteasome and a proteasome containing all three subunits (alpha1, alpha2, and beta) that appears to be asymmetrical with homo-oligomeric alpha1 and alpha2 rings positioned on separate ends. The catalytic chamber with the active sites is on the inside of the barrel. Has probably a gated structure, the ends of the cylinder being occluded by the N-termini of the alpha-subunits. Is likely capped at one or both ends by the proteasome regulatory ATPase, PAN.

It is found in the cytoplasm. Its activity is regulated as follows. The formation of the proteasomal ATPase PAN-20S proteasome complex, via the docking of the C-termini of PAN into the intersubunit pockets in the alpha-rings, triggers opening of the gate for substrate entry. Interconversion between the open-gate and close-gate conformations leads to a dynamic regulation of the 20S proteasome proteolysis activity. In terms of biological role, component of the proteasome core, a large protease complex with broad specificity involved in protein degradation. The H.volcanii alpha1-beta-alpha2 proteasome is able to cleave oligopeptides after Tyr and thus displays chymotrypsin-like activity. This Haloferax volcanii (strain ATCC 29605 / DSM 3757 / JCM 8879 / NBRC 14742 / NCIMB 2012 / VKM B-1768 / DS2) (Halobacterium volcanii) protein is Proteasome subunit alpha 2.